A 65-amino-acid chain; its full sequence is Large ribosomal subunit protein bL33 (65 aa).

Residues 17-40 are disordered; it reads SRSVPSSEKRSAGVSRYTTEKNRR.

The protein belongs to the bacterial ribosomal protein bL33 family.

The protein is Large ribosomal subunit protein bL33 of Prochlorococcus marinus (strain NATL1A).